Consider the following 260-residue polypeptide: NAD-capped RNA hydrolase NudC (260 aa).

Arginine 74 is a substrate binding site. The Zn(2+) site is built by cysteine 103, cysteine 106, cysteine 121, and cysteine 124. Tyrosine 129 provides a ligand contact to substrate. The Nudix hydrolase domain occupies 130–253 (PRIFPCIIVA…TIARALIEQT (124 aa)). Positions 163, 179, and 183 each coordinate a divalent metal cation. The short motif at 164 to 185 (GFLEAGETLEDCVAREVHEETG) is the Nudix box element. Residue 197–204 (QPWAFPSS) coordinates substrate. Residue glutamate 224 participates in a divalent metal cation binding. Substrate is bound at residue alanine 246.

Belongs to the Nudix hydrolase family. NudC subfamily. Homodimer. The cofactor is Mg(2+). Mn(2+) serves as cofactor. Requires Zn(2+) as cofactor.

It carries out the reaction a 5'-end NAD(+)-phospho-ribonucleoside in mRNA + H2O = a 5'-end phospho-adenosine-phospho-ribonucleoside in mRNA + beta-nicotinamide D-ribonucleotide + 2 H(+). The enzyme catalyses NAD(+) + H2O = beta-nicotinamide D-ribonucleotide + AMP + 2 H(+). It catalyses the reaction NADH + H2O = reduced beta-nicotinamide D-ribonucleotide + AMP + 2 H(+). Its function is as follows. mRNA decapping enzyme that specifically removes the nicotinamide adenine dinucleotide (NAD) cap from a subset of mRNAs by hydrolyzing the diphosphate linkage to produce nicotinamide mononucleotide (NMN) and 5' monophosphate mRNA. The NAD-cap is present at the 5'-end of some mRNAs and stabilizes RNA against 5'-processing. Has preference for mRNAs with a 5'-end purine. Catalyzes the hydrolysis of a broad range of dinucleotide pyrophosphates. The protein is NAD-capped RNA hydrolase NudC of Vibrio parahaemolyticus serotype O3:K6 (strain RIMD 2210633).